A 229-amino-acid polypeptide reads, in one-letter code: Sperm flagellar protein 1 (229 aa).

The region spanning 7-115 (EETMQELYTW…TLRQKIEEKQ (109 aa)) is the Calponin-homology (CH) domain. A disordered region spans residues 122–169 (ADLSQDQATQNNGNTHSDKGYKSNGTELSPRQGARVDPASKTHQGYAQ). Polar residues predominate over residues 123–136 (DLSQDQATQNNGNT). The interval 178 to 229 (RFQLAEKEQTLILSQETIQILQAKLRRLEQLLLLKNVRIDDLTRRLQELEKK) is essential for homodimerization and microtubule bundling activity.

In terms of assembly, homodimer.

The protein localises to the cytoplasm. The protein resides in the cytoskeleton. It localises to the cilium axoneme. It is found in the apical cell membrane. Functionally, microtubule-associated protein involved in the stabilization of microtubules along the axis of migration during radial intercalation. Promotes the establishment and stabilization of an axis of microtubules required for the active migration of cells into the outer epithelium. Microtubule-associated protein that promotes microtubule bundling and stabilizes microtubules against depolymerization in response to cold shock. Essential for ciliary central apparatus formation which requires both its microtubule-binding and bundling activities. Regulates planar cell polarity signaling pathway and asymmetric microtubule accumulation in ciliated epithelia. This Xenopus laevis (African clawed frog) protein is Sperm flagellar protein 1.